Reading from the N-terminus, the 124-residue chain is Large ribosomal subunit protein bL12 (124 aa).

This sequence belongs to the bacterial ribosomal protein bL12 family. In terms of assembly, homodimer. Part of the ribosomal stalk of the 50S ribosomal subunit. Forms a multimeric L10(L12)X complex, where L10 forms an elongated spine to which 2 to 4 L12 dimers bind in a sequential fashion. Binds GTP-bound translation factors.

In terms of biological role, forms part of the ribosomal stalk which helps the ribosome interact with GTP-bound translation factors. Is thus essential for accurate translation. This chain is Large ribosomal subunit protein bL12, found in Brucella abortus (strain S19).